The sequence spans 300 residues: Ribosomal protein bS6--L-glutamate ligase (300 aa).

The region spanning 104-287 (MQLLARQGID…IAGKMIRWIE (184 aa)) is the ATP-grasp domain. Residues K141, 178 to 179 (EY), D187, and 211 to 213 (RSN) contribute to the ATP site. Residues D248, E260, and N262 each coordinate Mg(2+). D248, E260, and N262 together coordinate Mn(2+).

This sequence belongs to the RimK family. Requires Mg(2+) as cofactor. It depends on Mn(2+) as a cofactor.

In terms of biological role, an L-glutamate ligase that catalyzes the ATP-dependent post-translational addition of glutamate residues to the C-terminus of ribosomal protein bS6 (RpsF). Is also able to catalyze the synthesis of poly-alpha-glutamate in vitro, via ATP hydrolysis from unprotected glutamate as substrate. The number of glutamate residues added to either RpsF or to poly-alpha-glutamate changes with pH. The sequence is that of Ribosomal protein bS6--L-glutamate ligase from Shigella boydii serotype 18 (strain CDC 3083-94 / BS512).